A 160-amino-acid polypeptide reads, in one-letter code: Phosphopantetheine adenylyltransferase (160 aa).

Residue serine 9 coordinates substrate. ATP-binding positions include 9-10 (SF) and histidine 17. Residues lysine 41, isoleucine 73, and lysine 87 each contribute to the substrate site. ATP contacts are provided by residues 88–90 (GLR), glutamate 98, and 122–128 (YSFVSSS).

This sequence belongs to the bacterial CoaD family. As to quaternary structure, homohexamer. The cofactor is Mg(2+).

It localises to the cytoplasm. The enzyme catalyses (R)-4'-phosphopantetheine + ATP + H(+) = 3'-dephospho-CoA + diphosphate. The protein operates within cofactor biosynthesis; coenzyme A biosynthesis; CoA from (R)-pantothenate: step 4/5. Functionally, reversibly transfers an adenylyl group from ATP to 4'-phosphopantetheine, yielding dephospho-CoA (dPCoA) and pyrophosphate. This Mycolicibacterium vanbaalenii (strain DSM 7251 / JCM 13017 / BCRC 16820 / KCTC 9966 / NRRL B-24157 / PYR-1) (Mycobacterium vanbaalenii) protein is Phosphopantetheine adenylyltransferase.